We begin with the raw amino-acid sequence, 312 residues long: DNA primase small subunit PriS (312 aa).

Catalysis depends on residues D88, D90, and D215.

Belongs to the eukaryotic-type primase small subunit family. Heterodimer of a small subunit (PriS) and a large subunit (PriL). Mg(2+) serves as cofactor. Requires Mn(2+) as cofactor.

Functionally, catalytic subunit of DNA primase, an RNA polymerase that catalyzes the synthesis of short RNA molecules used as primers for DNA polymerase during DNA replication. The small subunit contains the primase catalytic core and has DNA synthesis activity on its own. Binding to the large subunit stabilizes and modulates the activity, increasing the rate of DNA synthesis while decreasing the length of the DNA fragments, and conferring RNA synthesis capability. The DNA polymerase activity may enable DNA primase to also catalyze primer extension after primer synthesis. May also play a role in DNA repair. This is DNA primase small subunit PriS from Pyrobaculum calidifontis (strain DSM 21063 / JCM 11548 / VA1).